The following is a 264-amino-acid chain: Small ribosomal subunit protein uS2 (264 aa).

The tract at residues 225–264 (GKKAREERQLAAAKDAAGDAKPEAEEAPVAAEAEEAPAAE) is disordered.

It belongs to the universal ribosomal protein uS2 family.

The protein is Small ribosomal subunit protein uS2 of Corynebacterium glutamicum (strain R).